The primary structure comprises 441 residues: Peroxisomal biogenesis factor 3 (441 aa).

At 1–17 (MAPNQRSRSLLQRHRGK) the chain is on the peroxisomal side. The helical transmembrane segment at 18–39 (VLISLTGIAALFTTGSVVVFFV) threads the bilayer. The Cytoplasmic portion of the chain corresponds to 40–441 (KRWLYKQQLR…GVSSSFSFKP (402 aa)).

Belongs to the peroxin-3 family. Interacts with MSP1; leading to inhibit the translocase activity of MSP1.

It localises to the peroxisome membrane. Its function is as follows. Involved in peroxisome biosynthesis. Acts as a regulator of MSP1 by inhibiting the ability of MSP1 to unfold target proteins. The protein is Peroxisomal biogenesis factor 3 (PEX3) of Saccharomyces cerevisiae (strain ATCC 204508 / S288c) (Baker's yeast).